Reading from the N-terminus, the 371-residue chain is Probable RNA 3'-terminal phosphate cyclase-like protein (371 aa).

The protein belongs to the RNA 3'-terminal cyclase family. Type 2 subfamily. Part of the small subunit (SSU) processome, composed of more than 70 proteins and the RNA chaperone small nucleolar RNA (snoRNA) U3.

The protein resides in the nucleus. It localises to the nucleolus. Part of the small subunit (SSU) processome, first precursor of the small eukaryotic ribosomal subunit. During the assembly of the SSU processome in the nucleolus, many ribosome biogenesis factors, an RNA chaperone and ribosomal proteins associate with the nascent pre-rRNA and work in concert to generate RNA folding, modifications, rearrangements and cleavage as well as targeted degradation of pre-ribosomal RNA by the RNA exosome. Does not have cyclase activity. This chain is Probable RNA 3'-terminal phosphate cyclase-like protein (rcl1), found in Dictyostelium discoideum (Social amoeba).